We begin with the raw amino-acid sequence, 66 residues long: FMRFamide-like neuropeptides 24 (66 aa).

The N-terminal stretch at 1-22 (MSRTSIILVLAIFVAIAAIAQC) is a signal peptide. Positions 23–48 (RNIQYDVDEISPEAAFRYAQWGEIPH) are excised as a propeptide. At Phe-61 the chain carries Phenylalanine amide. Residues 65–66 (SV) constitute a propeptide that is removed on maturation.

Belongs to the FARP (FMRFamide related peptide) family.

The protein resides in the secreted. In terms of biological role, FMRFamides and FMRFamide-like peptides are neuropeptides. In Caenorhabditis briggsae, this protein is FMRFamide-like neuropeptides 24.